Reading from the N-terminus, the 472-residue chain is Glycine--tRNA ligase (472 aa).

Residues arginine 109 and glutamate 174 each coordinate substrate. Residues 206 to 208 (RNE), 216 to 221 (FRTREF), 293 to 294 (EL), and 337 to 340 (GLTR) contribute to the ATP site. Position 221 to 225 (221 to 225 (FEQME)) interacts with substrate. 333-337 (EPAAG) is a binding site for substrate.

This sequence belongs to the class-II aminoacyl-tRNA synthetase family. In terms of assembly, homodimer.

It localises to the cytoplasm. It carries out the reaction tRNA(Gly) + glycine + ATP = glycyl-tRNA(Gly) + AMP + diphosphate. Its function is as follows. Catalyzes the attachment of glycine to tRNA(Gly). The chain is Glycine--tRNA ligase from Cutibacterium acnes (strain DSM 16379 / KPA171202) (Propionibacterium acnes).